A 218-amino-acid polypeptide reads, in one-letter code: N-(5'-phosphoribosyl)anthranilate isomerase (218 aa).

It belongs to the TrpF family.

The enzyme catalyses N-(5-phospho-beta-D-ribosyl)anthranilate = 1-(2-carboxyphenylamino)-1-deoxy-D-ribulose 5-phosphate. It participates in amino-acid biosynthesis; L-tryptophan biosynthesis; L-tryptophan from chorismate: step 3/5. The sequence is that of N-(5'-phosphoribosyl)anthranilate isomerase from Rhodopseudomonas palustris (strain HaA2).